Reading from the N-terminus, the 199-residue chain is dITP/XTP pyrophosphatase (199 aa).

8 to 13 (SGNAGK) is a substrate binding site. The Proton acceptor role is filled by Asp-69. Asp-69 lines the Mg(2+) pocket. Substrate contacts are provided by residues Ser-70, 154-157 (FGYN), Lys-177, and 182-183 (HR).

It belongs to the HAM1 NTPase family. In terms of assembly, homodimer. Requires Mg(2+) as cofactor.

The catalysed reaction is XTP + H2O = XMP + diphosphate + H(+). It carries out the reaction dITP + H2O = dIMP + diphosphate + H(+). The enzyme catalyses ITP + H2O = IMP + diphosphate + H(+). Functionally, pyrophosphatase that catalyzes the hydrolysis of nucleoside triphosphates to their monophosphate derivatives, with a high preference for the non-canonical purine nucleotides XTP (xanthosine triphosphate), dITP (deoxyinosine triphosphate) and ITP. Seems to function as a house-cleaning enzyme that removes non-canonical purine nucleotides from the nucleotide pool, thus preventing their incorporation into DNA/RNA and avoiding chromosomal lesions. The sequence is that of dITP/XTP pyrophosphatase from Xylella fastidiosa (strain Temecula1 / ATCC 700964).